A 207-amino-acid chain; its full sequence is Outer-membrane lipoprotein LolB (207 aa).

Residues 1–21 (MPTNTVRCLRLLPLASVLLAA) form the signal peptide. Cys22 carries N-palmitoyl cysteine lipidation. Cys22 is lipidated: S-diacylglycerol cysteine.

Belongs to the LolB family. Monomer.

The protein localises to the cell outer membrane. Plays a critical role in the incorporation of lipoproteins in the outer membrane after they are released by the LolA protein. This Pectobacterium carotovorum subsp. carotovorum (strain PC1) protein is Outer-membrane lipoprotein LolB.